We begin with the raw amino-acid sequence, 888 residues long: Semaphorin-6B (888 aa).

The signal sequence occupies residues 1 to 25 (MQTPRASPPRPALLLLLLLLGGAHG). Residues 26–603 (LFPEEPPPLS…VSVNLLVTSS (578 aa)) lie on the Extracellular side of the membrane. One can recognise a Sema domain in the interval 31 to 523 (PPPLSVAPRD…FPRCVVRVPV (493 aa)). N-linked (GlcNAc...) asparagine glycosylation is present at Asn-74. Cystine bridges form between Cys-116-Cys-126 and Cys-144-Cys-153. Residues Asn-155, Asn-167, and Asn-291 are each glycosylated (N-linked (GlcNAc...) asparagine). 2 cysteine pairs are disulfide-bonded: Cys-267–Cys-378 and Cys-292–Cys-337. Residues Asn-386, Asn-441, and Asn-462 are each glycosylated (N-linked (GlcNAc...) asparagine). Cystine bridges form between Cys-486–Cys-517, Cys-526–Cys-544, Cys-532–Cys-578, and Cys-536–Cys-552. A helical transmembrane segment spans residues 604-624 (VAAFVVGAVVSGFSVGWFVGL). The Cytoplasmic segment spans residues 625–888 (RERRELARRK…GADRTAPPVP (264 aa)). Disordered stretches follow at residues 651-679 (VSRL…PPEA), 695-742 (LQGG…HPLL), and 757-888 (RAPE…PPVP). A compositionally biased stretch (gly residues) spans 661–674 (GPGGRGGGGGGGAG). Arg-665 bears the Omega-N-methylarginine mark. Residues 706–717 (LLPTPEQTPLPQ) show a composition bias toward low complexity.

This sequence belongs to the semaphorin family. (Microbial infection) Interacts with P.sordellii toxin TcsL; semaphorins SEMA6A and SEMA6B constitute the major host receptors for TcsL in the vascular endothelium. In terms of tissue distribution, expressed in the brain in GABAergic neurons.

The protein localises to the cell membrane. Functionally, functions as a cell surface repellent for mossy fibers of developing neurons in the hippocampus where it plays a role in axon guidance. May function through the PLXNA4 receptor expressed by mossy cell axons. In terms of biological role, (Microbial infection) Acts as a receptor for P.sordellii toxin TcsL in the in the vascular endothelium. The polypeptide is Semaphorin-6B (SEMA6B) (Homo sapiens (Human)).